Reading from the N-terminus, the 1105-residue chain is Pheromone-regulated membrane protein 10 (1105 aa).

A compositionally biased stretch (polar residues) spans 1–11 (MSDNRPTYDTS). Disordered stretches follow at residues 1 to 22 (MSDNRPTYDTSSSDEEPSNHFH), 36 to 55 (RKQNHKKHEKPTIAKQTASN), 65 to 123 (GSNH…FYGD), 151 to 278 (IKPK…GGGL), 385 to 473 (AGAS…FLRG), and 520 to 656 (EQKS…LRHK). Over residues 67–82 (NHKFGNSINNNNNNAN) the composition is skewed to low complexity. A compositionally biased stretch (polar residues) spans 85-106 (LGSSSAGTNRRSLISPTSSTHV). A compositionally biased stretch (acidic residues) spans 162–178 (DSSDDDGNNLDEVEDET). The span at 185 to 197 (LNQNHPPQQYYET) shows a compositional bias: polar residues. Residues 198-210 (DSSDEDEEDDDEV) show a composition bias toward acidic residues. Residues 390–413 (LDHSQQSSAAPSTEITPSQSPNQH) are compositionally biased toward polar residues. Residues 417 to 439 (EKSNNNENNQQSTTVESSSSTSS) are compositionally biased toward low complexity. Basic and acidic residues predominate over residues 446–459 (LARRRASEERKKAE). Polar residues-rich tracts occupy residues 520–539 (EQKSASSLSRVSTGTSGTAL), 592–606 (RTNTVETQGSSNSEE), and 624–633 (MNANLPSFQN). 10 helical membrane passes run 782–802 (PPWLCVLFYGLGSLAVTPFAF), 809–829 (LPISFGVGLCVGYLQFYVSSI), 835–855 (SVFEVSAAIVVAFIARGIGSI), 860–880 (LFCFSAIAQGSLAIILPGYII), 903–923 (VIYSLFLGFGITLGAALYGWI), 938–958 (AIDEKWRILFVPMFALCLGLI), 963–983 (WSQVPIMIVIAGIGYIGSFFA), 986–1006 (HFSTVTEFTACIGAFIVGVLG), 1015–1035 (GMAVSAMLPAIFVQVPSGIAS), and 1075–1095 (VEVSIGISVGLFAAALIIYPF).

Belongs to the ThrE exporter (TC 2.A.79) family.

It localises to the membrane. This Candida albicans (strain SC5314 / ATCC MYA-2876) (Yeast) protein is Pheromone-regulated membrane protein 10 (PRM10).